The sequence spans 175 residues: Small ribosomal subunit protein mS38 (175 aa).

Belongs to the mitochondrion-specific ribosomal protein mS38 family. As to quaternary structure, component of the mitochondrial small ribosomal subunit (mt-SSU). Mature yeast 74S mitochondrial ribosomes consist of a small (37S) and a large (54S) subunit. The 37S small subunit contains a 15S ribosomal RNA (15S mt-rRNA) and at least 32 different proteins. The 54S large subunit contains a 21S rRNA (21S mt-rRNA) and at least 45 different proteins.

The protein resides in the mitochondrion. It localises to the mitochondrion inner membrane. Its function is as follows. Component of the mitochondrial ribosome (mitoribosome), a dedicated translation machinery responsible for the synthesis of mitochondrial genome-encoded proteins, including at least some of the essential transmembrane subunits of the mitochondrial respiratory chain. The mitoribosomes are attached to the mitochondrial inner membrane and translation products are cotranslationally integrated into the membrane. mS38 is also involved in the splicing of the COX1 mRNA. This chain is Small ribosomal subunit protein mS38 (cox24), found in Schizosaccharomyces pombe (strain 972 / ATCC 24843) (Fission yeast).